A 237-amino-acid polypeptide reads, in one-letter code: 7-cyano-7-deazaguanine synthase (237 aa).

14-24 (FSGGQDSATCL) serves as a coordination point for ATP. The Zn(2+) site is built by C202, C217, C220, and C223.

Belongs to the QueC family. Zn(2+) is required as a cofactor.

The enzyme catalyses 7-carboxy-7-deazaguanine + NH4(+) + ATP = 7-cyano-7-deazaguanine + ADP + phosphate + H2O + H(+). The protein operates within purine metabolism; 7-cyano-7-deazaguanine biosynthesis. Catalyzes the ATP-dependent conversion of 7-carboxy-7-deazaguanine (CDG) to 7-cyano-7-deazaguanine (preQ(0)). The sequence is that of 7-cyano-7-deazaguanine synthase from Rhodopseudomonas palustris (strain TIE-1).